A 582-amino-acid chain; its full sequence is A-type ATP synthase subunit A 1 (582 aa).

Residue 231–238 (GPFGSGKT) participates in ATP binding.

This sequence belongs to the ATPase alpha/beta chains family. In terms of assembly, has multiple subunits with at least A(3), B(3), C, D, E, F, H, I and proteolipid K(x).

Its subcellular location is the cell membrane. The catalysed reaction is ATP + H2O + 4 H(+)(in) = ADP + phosphate + 5 H(+)(out). Functionally, component of the A-type ATP synthase that produces ATP from ADP in the presence of a proton gradient across the membrane. The A chain is the catalytic subunit. The chain is A-type ATP synthase subunit A 1 from Methanospirillum hungatei JF-1 (strain ATCC 27890 / DSM 864 / NBRC 100397 / JF-1).